The chain runs to 1661 residues: MATDGASCEPDFSRASEDAAEATAEATAEAAKKEFDVDTLSKSELRMLLSVMEGELEARDLVIEALRARRKEVFIQERYGRFNLNDPFLALQRDYEAGAREKEKKPVCTNPLSILEAVMAHCRKMQERMSTQLAAAESRQKKLEMEKLQLQALEQEHKKLAARLEEERGKNKHVVLMLVKECKQLSGKVIEEAQKVEEVMAQLEEEKKRTNELEEELSTEKRRSTEMEAQMEKQLSEFDTEREQLRAKLNREEAHTTDLKEEIDKMKKMIEQLKRGNDSKPSLSLPRKVKDRRLVSVSVGTEGPVTRSVACQTDLVVESTDHVKKLPLTVPVKPSAGSPLVSASAKGNVVRPSVDRQASHGDLILSSVPTVPPPSVNKTEENGPSTGSTPDLPSSTPPLPNNTAPPAVQPPSIASQNYSQASSLHSLHSPCANASLHPGVNPRIQAVRFRFQGNANDQDQNGNTTQSPPSRDVSPTSRDNLVAKQLARNTVTQALSRFTGPQVGASARPGAPTTGDISTHPPVGRTSLKTSGVARVDRGNPPPIPPKKPGLSQTPSPPHPQLKVIMDSSRASNAGAKVDKTVASPPTSLPQGNRVINEENLPKSSSPQLPPKPSIDLTVAPAGCAVSALATSQVGAWRAETPGLNQPACSDSSLVIPTTIAFCSSINPVSASSCRPGASDSLLVTASGWSPSLTPLLMSGGPAPLAGRPTLLQQAAAQGNVTLLSMLLNEEGLDINYSCEDGHSALYSAAKNGHTDCVRLLLNAEAQVNAADKNGFTPLCAAAAQGHDKCVELLIAYRANINHAADGGQTPLYLACKNGNKECIKLLLEAGTDRSVKTRDGWTPVHAAVDTGNVDSLKLLMYHRAPACGDRLNEEEPESDVFDLDGGGERPEGTVKPVVPADLINHADREGWTAAHIAASKGFKNCLEILCQHGGLEPERNDKCNRTVHDVATDDCKHLLENLNALKIPLRISMSETQRDSFGSDDFECENTIWALTIRRQTSWDDFSKGVIQALTNHFQAISSDGWWSLEDVTFNNTTESSIGLGASSVLSIMLGSVSWSPGQSFAQSPWDFLKKNKAEQVTVLLSGPQEGCLSSVTYASMIPLPMLQNYLRLVEQYHNVIFHGPEGSLQDYIAHQLALCMKHRQMAVGFSCEIVRAEVDAAFCKEQLVDLFIRNACLIPVKQSPGNKKVIVILENLEKSSLSELLGDFLAPLENRSTESPCTFQKGNGTSECYYFHENCFLMGTIAKACLQGSDLLVQQHFRWVQLRWDGEPMQGLLQRFLRRKAVNKFRGKLSSPRDPVCKTVDWALSVWRQLNSCLARLGTPEALLGPKYFLSCPVVPGHAQATVKWMSKLWNAVIAPRVQEAILSKASVKRQPGLGQTNAKKHPSQGQQAVVKAALSILLNKAVLHGCPLPRAELDQYIAEFKGGSFPLSIVSSYSSCGKKKGENGAWRKVSTSPRKKSGRFPSPTWSKPDLSDEGIKNKTVSQLNCNRNASLSRQKCLENDLSLTLNLDQRLSLGSDDEADLVKELQSMCSSKSESDISKIADSRDDLRRFDSSRNSPAFSATVNNPRMPVSQKEVSPLSSHQTTECSNSKLKTELGVSRVKSFLPVPRSKVAQCSQNTRRSSSSSNTRQIEINNNSKDEIWNLRKNEQVEKPNK.

5 disordered regions span residues 1-27 (MATDGASCEPDFSRASEDAAEATAEAT), 206-226 (EKKRTNELEEELSTEKRRSTE), 329-438 (TVPV…SLHP), 454-477 (NANDQDQNGNTTQSPPSRDVSPTS), and 493-612 (QALS…LPPK). Positions 124-280 (KMQERMSTQL…EQLKRGNDSK (157 aa)) form a coiled coil. Positions 383 to 394 (GPSTGSTPDLPS) are enriched in low complexity. The span at 412–426 (SIASQNYSQASSLHS) shows a compositional bias: polar residues. The segment covering 454 to 466 (NANDQDQNGNTTQ) has biased composition (low complexity). Residues 467–477 (SPPSRDVSPTS) are compositionally biased toward polar residues. Position 497 is an asymmetric dimethylarginine (Arg497). ANK repeat units lie at residues 707-737 (GRPTLLQQAAAQGNVTLLSMLLNEEGLDINY), 741-770 (DGHSALYSAAKNGHTDCVRLLLNAEAQVNA), 774-803 (NGFTPLCAAAAQGHDKCVELLIAYRANINH), 807-836 (GGQTPLYLACKNGNKECIKLLLEAGTDRSV), and 840-869 (DGWTPVHAAVDTGNVDSLKLLMYHRAPACG). The segment at 876–896 (EPESDVFDLDGGGERPEGTVK) is disordered. An ANK 6 repeat occupies 910-940 (EGWTAAHIAASKGFKNCLEILCQHGGLEPER). The interval 1444 to 1480 (GKKKGENGAWRKVSTSPRKKSGRFPSPTWSKPDLSDE) is disordered. Ser1522 carries the post-translational modification Phosphoserine. Disordered regions lie at residues 1555–1597 (RRFD…SNSK) and 1614–1661 (PRSK…KPNK). Residues 1580 to 1597 (KEVSPLSSHQTTECSNSK) show a composition bias toward polar residues. Low complexity predominate over residues 1622–1636 (SQNTRRSSSSSNTRQ). Over residues 1643 to 1661 (SKDEIWNLRKNEQVEKPNK) the composition is skewed to basic and acidic residues.

As to quaternary structure, interacts with CTTN/cortactin SH3 domain. Interacts with STRN, STRN4/zinedin and MOB4/phocein; this interactions mediate the association with the STRIPAK core complex and may regulate dendritic spine distribution of the STRIPAK complex in hippocampal neurons. Activation of glutamate receptors weakens the interaction with STRN and STRN4.

Its subcellular location is the cytoplasm. It localises to the cell cortex. The protein resides in the cell projection. The protein localises to the dendritic spine. In terms of biological role, regulates the dendritic spine distribution of CTTN/cortactin in hippocampal neurons, and thus controls dendritic spinogenesis and dendritic spine maintenance. Associates with the striatin-interacting phosphatase and kinase (STRIPAK) core complex to regulate dendritic spine distribution of the STRIPAK complex in hippocampal neurons. This is Cortactin-binding protein 2 (CTTNBP2) from Loxodonta africana (African elephant).